The primary structure comprises 806 residues: Leucine--tRNA ligase (806 aa).

The 'HIGH' region motif lies at 38 to 48 (PYPSGEIHMGH). Residues 572-576 (KMSKS) carry the 'KMSKS' region motif. K575 is a binding site for ATP.

Belongs to the class-I aminoacyl-tRNA synthetase family.

Its subcellular location is the cytoplasm. It catalyses the reaction tRNA(Leu) + L-leucine + ATP = L-leucyl-tRNA(Leu) + AMP + diphosphate. The chain is Leucine--tRNA ligase from Helicobacter acinonychis (strain Sheeba).